We begin with the raw amino-acid sequence, 315 residues long: Protease HtpX homolog (315 aa).

The chain crosses the membrane as a helical span at residues 16–36 (LFMGIGYLIGGASGALIALVV). Residue H130 coordinates Zn(2+). E131 is an active-site residue. A Zn(2+)-binding site is contributed by H134. 2 helical membrane passes run 145 to 165 (ITATIAGAISMVAQFGMFFGG) and 172 to 192 (GPGLIGSLALMILAPLGAMLV). Position 201 (E201) interacts with Zn(2+). The interval 282–315 (GGGGASIGRPAGPSPRGAPRSPWSGQPRARGPWG) is disordered. Over residues 288–303 (IGRPAGPSPRGAPRSP) the composition is skewed to low complexity.

Belongs to the peptidase M48B family. Zn(2+) serves as cofactor.

It localises to the cell inner membrane. The polypeptide is Protease HtpX homolog (Rhodopseudomonas palustris (strain BisB5)).